The following is a 533-amino-acid chain: NAD(P)H-quinone oxidoreductase chain 4 1 (533 aa).

A run of 14 helical transmembrane segments spans residues phenylalanine 6 to isoleucine 26, tyrosine 37 to phenylalanine 57, leucine 87 to tryptophan 107, proline 113 to alanine 133, methionine 137 to tryptophan 157, phenylalanine 169 to phenylalanine 189, tryptophan 209 to phenylalanine 229, asparagine 243 to isoleucine 263, phenylalanine 277 to phenylalanine 297, isoleucine 311 to glycine 331, alanine 332 to valine 352, phenylalanine 376 to valine 396, valine 417 to leucine 437, and leucine 461 to threonine 481.

It belongs to the complex I subunit 4 family.

Its subcellular location is the cellular thylakoid membrane. It catalyses the reaction a plastoquinone + NADH + (n+1) H(+)(in) = a plastoquinol + NAD(+) + n H(+)(out). The enzyme catalyses a plastoquinone + NADPH + (n+1) H(+)(in) = a plastoquinol + NADP(+) + n H(+)(out). Functionally, NDH-1 shuttles electrons from NAD(P)H, via FMN and iron-sulfur (Fe-S) centers, to quinones in the respiratory chain. The immediate electron acceptor for the enzyme in this species is believed to be plastoquinone. Couples the redox reaction to proton translocation (for every two electrons transferred, four hydrogen ions are translocated across the cytoplasmic membrane), and thus conserves the redox energy in a proton gradient. This chain is NAD(P)H-quinone oxidoreductase chain 4 1, found in Synechococcus elongatus (strain ATCC 33912 / PCC 7942 / FACHB-805) (Anacystis nidulans R2).